Consider the following 262-residue polypeptide: Thrombin-like enzyme gyroxin B1.4 (262 aa).

The N-terminal stretch at 1–18 (MVLIRVLANLLILQLSYA) is a signal peptide. A propeptide spanning residues 19–262 (QKSSELVIGG…AGNTIVNCPP (244 aa)) is cleaved from the precursor. The Peptidase S1 domain occupies 25–253 (VIGGDECNIN…HLDWIQSIIA (229 aa)). Cystine bridges form between cysteine 31/cysteine 165, cysteine 52/cysteine 68, cysteine 102/cysteine 260, cysteine 144/cysteine 214, cysteine 176/cysteine 193, and cysteine 204/cysteine 229. The active-site Charge relay system is histidine 67. N-linked (GlcNAc...) asparagine glycosylation occurs at asparagine 105. Aspartate 112 acts as the Charge relay system in catalysis. Serine 208 acts as the Charge relay system in catalysis.

This sequence belongs to the peptidase S1 family. Snake venom subfamily. Monomer. In terms of tissue distribution, expressed by the venom gland.

It is found in the secreted. Thrombin-like snake venom serine protease. Displays a specificity similar to trypsin. Releases only fibrinopeptide A in the conversion of fibrinogen to fibrin. Shows coagulant, esterase and amidase activities. Reversibly increases the permeability of the blood brain barrier (BBB) in mice. Induces the barrel rotation syndrome in mice, which is manifested by gyroxin-like, rapid rolling motions. This syndrome may be due to its effect on BBB permeability, and certainly also to other actions affecting endogenous substrates present in the endothelium, nervous tissues or blood. In Crotalus durissus terrificus (South American rattlesnake), this protein is Thrombin-like enzyme gyroxin B1.4.